Consider the following 93-residue polypeptide: Large ribosomal subunit protein uL23 (93 aa).

The protein belongs to the universal ribosomal protein uL23 family. As to quaternary structure, part of the 50S ribosomal subunit. Contacts protein L29, and trigger factor when it is bound to the ribosome.

In terms of biological role, one of the early assembly proteins it binds 23S rRNA. One of the proteins that surrounds the polypeptide exit tunnel on the outside of the ribosome. Forms the main docking site for trigger factor binding to the ribosome. The chain is Large ribosomal subunit protein uL23 from Campylobacter hominis (strain ATCC BAA-381 / DSM 21671 / CCUG 45161 / LMG 19568 / NCTC 13146 / CH001A).